Reading from the N-terminus, the 308-residue chain is HTH-type transcriptional regulator SsuR (308 aa).

The region spanning 1-59 (MNFQQLRFVREAVRQNMNLTEVANVLYTSQSGVSKQIKDLEDELGVDIFIRRGKRLTGL) is the HTH lysR-type domain. Positions 19–38 (LTEVANVLYTSQSGVSKQIK) form a DNA-binding region, H-T-H motif.

This sequence belongs to the LysR transcriptional regulatory family.

Transcriptional regulator that is essential for the utilization of a number of organic sulfur sources of either environmental or human origin. Required for aliphatic sulfonate utilization. Binds to DNA at target promoter regions. Targets include the ssuDBC operon, the tauABC operon, three tauD-type genes and atsA. This chain is HTH-type transcriptional regulator SsuR, found in Burkholderia cenocepacia (strain ATCC BAA-245 / DSM 16553 / LMG 16656 / NCTC 13227 / J2315 / CF5610) (Burkholderia cepacia (strain J2315)).